A 211-amino-acid polypeptide reads, in one-letter code: Ribonuclease T (211 aa).

The 175-residue stretch at 24 to 198 (VVVDVETGGF…YDAEKTAHLF (175 aa)) folds into the Exonuclease domain. Residues Asp-27, Glu-29, His-185, and Asp-190 each coordinate Mg(2+). His-185 acts as the Proton donor/acceptor in catalysis.

This sequence belongs to the RNase T family. As to quaternary structure, homodimer. It depends on Mg(2+) as a cofactor.

Its function is as follows. Trims short 3' overhangs of a variety of RNA species, leaving a one or two nucleotide 3' overhang. Responsible for the end-turnover of tRNA: specifically removes the terminal AMP residue from uncharged tRNA (tRNA-C-C-A). Also appears to be involved in tRNA biosynthesis. This is Ribonuclease T from Xylella fastidiosa (strain Temecula1 / ATCC 700964).